A 375-amino-acid chain; its full sequence is DNA replication and repair protein RecF (375 aa).

ATP is bound at residue 30 to 37 (GDNAQGKS).

Belongs to the RecF family.

Its subcellular location is the cytoplasm. Functionally, the RecF protein is involved in DNA metabolism; it is required for DNA replication and normal SOS inducibility. RecF binds preferentially to single-stranded, linear DNA. It also seems to bind ATP. The protein is DNA replication and repair protein RecF of Gloeobacter violaceus (strain ATCC 29082 / PCC 7421).